The following is a 745-amino-acid chain: Phosphoribosylformylglycinamidine synthase subunit PurL (745 aa).

His-50 is an active-site residue. The ATP site is built by Tyr-53 and Lys-92. Glu-94 serves as a coordination point for Mg(2+). Substrate contacts are provided by residues 95–98 (SHNH) and Arg-117. The Proton acceptor role is filled by His-96. Residue Asp-118 participates in Mg(2+) binding. Gln-241 contributes to the substrate binding site. A Mg(2+)-binding site is contributed by Asp-269. Substrate is bound at residue 313–315 (ESQ). ATP is bound by residues Asp-495 and Gly-532. Residue Asn-533 participates in Mg(2+) binding. Position 535 (Ser-535) interacts with substrate.

The protein belongs to the FGAMS family. Monomer. Part of the FGAM synthase complex composed of 1 PurL, 1 PurQ and 2 PurS subunits.

The protein resides in the cytoplasm. It catalyses the reaction N(2)-formyl-N(1)-(5-phospho-beta-D-ribosyl)glycinamide + L-glutamine + ATP + H2O = 2-formamido-N(1)-(5-O-phospho-beta-D-ribosyl)acetamidine + L-glutamate + ADP + phosphate + H(+). The protein operates within purine metabolism; IMP biosynthesis via de novo pathway; 5-amino-1-(5-phospho-D-ribosyl)imidazole from N(2)-formyl-N(1)-(5-phospho-D-ribosyl)glycinamide: step 1/2. Its function is as follows. Part of the phosphoribosylformylglycinamidine synthase complex involved in the purines biosynthetic pathway. Catalyzes the ATP-dependent conversion of formylglycinamide ribonucleotide (FGAR) and glutamine to yield formylglycinamidine ribonucleotide (FGAM) and glutamate. The FGAM synthase complex is composed of three subunits. PurQ produces an ammonia molecule by converting glutamine to glutamate. PurL transfers the ammonia molecule to FGAR to form FGAM in an ATP-dependent manner. PurS interacts with PurQ and PurL and is thought to assist in the transfer of the ammonia molecule from PurQ to PurL. The chain is Phosphoribosylformylglycinamidine synthase subunit PurL from Allorhizobium ampelinum (strain ATCC BAA-846 / DSM 112012 / S4) (Agrobacterium vitis (strain S4)).